The following is a 232-amino-acid chain: Putative quercetin 2,3-dioxygenase PA1210 (232 aa).

The a divalent metal cation site is built by His57, His59, His101, and Glu103.

Belongs to the pirin family. A divalent metal cation serves as cofactor.

It catalyses the reaction quercetin + O2 = 2-(3,4-dihydroxybenzoyloxy)-4,6-dihydroxybenzoate + CO. The protein operates within flavonoid metabolism; quercetin degradation. In terms of biological role, putative quercetin 2,3-dioxygenase. The polypeptide is Putative quercetin 2,3-dioxygenase PA1210 (Pseudomonas aeruginosa (strain ATCC 15692 / DSM 22644 / CIP 104116 / JCM 14847 / LMG 12228 / 1C / PRS 101 / PAO1)).